The following is a 252-amino-acid chain: MNPAIDLNCDMGESYGAWRMGNDEAVLQFVTSANIACGFHGGDPSTMRQTVAAALAHGVALGAHPSLPDLAGFGRRAMQITPQEAYDLVVYQVGALAGVAASQGARLHHVKAHGALYNMAAKDAALARAICQAVRDVDSDLVLYGLAGSALIDAARAIGLRAAQEVFADRTYQADGQLTPRSQPDAMITDLDQAIAQVLGMVRDGSVRTPDGQTVALQADTLCIHGDQPDALVFARGIRLALERNGIAIQAA.

It belongs to the LamB/PxpA family. In terms of assembly, forms a complex composed of PxpA, PxpB and PxpC.

It carries out the reaction 5-oxo-L-proline + ATP + 2 H2O = L-glutamate + ADP + phosphate + H(+). Its function is as follows. Catalyzes the cleavage of 5-oxoproline to form L-glutamate coupled to the hydrolysis of ATP to ADP and inorganic phosphate. The chain is 5-oxoprolinase subunit A 1 from Bordetella bronchiseptica (strain ATCC BAA-588 / NCTC 13252 / RB50) (Alcaligenes bronchisepticus).